A 334-amino-acid chain; its full sequence is Stabilizer of axonemal microtubules 3 (334 aa).

Disordered stretches follow at residues 81 to 105, 128 to 153, and 233 to 260; these read AYVP…PTRT, YQSS…YFGP, and QVWS…RVPR. Polar residues predominate over residues 128 to 141; it reads YQSSETRAQYTGSP. Positions 240–251 are enriched in pro residues; it reads QRPPCPRSSRPP.

The protein is Stabilizer of axonemal microtubules 3 of Homo sapiens (Human).